Here is a 385-residue protein sequence, read N- to C-terminus: 8-amino-7-oxononanoate synthase (385 aa).

Substrate is bound at residue arginine 21. 108–109 (GF) is a binding site for pyridoxal 5'-phosphate. Position 133 (histidine 133) interacts with substrate. Residues serine 179, histidine 207, and threonine 233 each coordinate pyridoxal 5'-phosphate. Residue lysine 236 is modified to N6-(pyridoxal phosphate)lysine. Threonine 352 serves as a coordination point for substrate.

The protein belongs to the class-II pyridoxal-phosphate-dependent aminotransferase family. BioF subfamily. As to quaternary structure, homodimer. Requires pyridoxal 5'-phosphate as cofactor.

It catalyses the reaction 6-carboxyhexanoyl-[ACP] + L-alanine + H(+) = (8S)-8-amino-7-oxononanoate + holo-[ACP] + CO2. It participates in cofactor biosynthesis; biotin biosynthesis. Functionally, catalyzes the decarboxylative condensation of pimeloyl-[acyl-carrier protein] and L-alanine to produce 8-amino-7-oxononanoate (AON), [acyl-carrier protein], and carbon dioxide. The protein is 8-amino-7-oxononanoate synthase of Salmonella arizonae (strain ATCC BAA-731 / CDC346-86 / RSK2980).